We begin with the raw amino-acid sequence, 200 residues long: Phospholipase A2 inhibitor gamma subunit A (200 aa).

Positions 1–19 (MKSLHTICLLFIFIARGNS) are cleaved as a signal peptide. Cystine bridges form between Cys-22/Cys-46, Cys-25/Cys-32, Cys-39/Cys-67, Cys-73/Cys-94, Cys-95/Cys-100, Cys-118/Cys-143, Cys-136/Cys-165, and Cys-169/Cys-191. N-linked (GlcNAc...) asparagine glycosylation is present at Asn-176.

It belongs to the CNF-like-inhibitor family. Occurs as a mixture of oligomers. Tetrameric arrangement appears to be the predominant quaternary structure. As to expression, expressed by the liver.

Its subcellular location is the secreted. Its function is as follows. Inhibits the enzymatic activity of phospholipase A2 (PA2). This chain is Phospholipase A2 inhibitor gamma subunit A, found in Gloydius brevicaudus siniticus (Chinese mamushi).